Here is a 297-residue protein sequence, read N- to C-terminus: Mitochondrial citrate transporter A (297 aa).

Solcar repeat units follow at residues 12-91, 102-188, and 199-286; these read PSSL…LKSL, PKTV…LKQM, and LGTA…TMDA. Transmembrane regions (helical) follow at residues 18–31, 61–81, 99–119, 160–180, 192–212, and 251–272; these read IIAGSTAGAVEIAI, SQWYAGCTTLIIGNSLKAGIR, ISGPKTVIAGFGAGFTESLLA, FFQGFVPTTARQAANSATRFS, YVAPGEKLGTASTFALGGIAG, and KDEGIFTFWSGAVPRLARLIMS.

The protein belongs to the mitochondrial carrier (TC 2.A.29) family.

The protein localises to the mitochondrion inner membrane. It catalyses the reaction citrate(in) + H(+)(in) = citrate(out) + H(+)(out). In terms of biological role, mitochondrial transporter that mediates citrate export from mitochondria to cytoplasm. Both ctpA, ctpB, and ctpD play important roles in citric acid transport across the mitochondrial membrane and function in a redundant manner. The polypeptide is Mitochondrial citrate transporter A (Aspergillus niger (strain ATCC 1015 / CBS 113.46 / FGSC A1144 / LSHB Ac4 / NCTC 3858a / NRRL 328 / USDA 3528.7)).